Here is a 626-residue protein sequence, read N- to C-terminus: Probable potassium transport system protein Kup 3 (626 aa).

The next 12 helical transmembrane spans lie at 10–30 (LATL…TSPL), 51–71 (VLGI…LKYV), 107–127 (VLLG…TPAI), 141–161 (PAFK…LFIF), 173–193 (FGPV…AAIV), 216–236 (LLGF…EALY), 251–271 (WLGY…ALLL), 293–313 (LVAL…SGAF), 341–361 (IYLP…VIEF), 371–391 (YGIA…AVAV), 401–421 (AMLG…ANSV), and 423–443 (IADG…LLTT).

The protein belongs to the HAK/KUP transporter (TC 2.A.72) family.

Its subcellular location is the cell inner membrane. It carries out the reaction K(+)(in) + H(+)(in) = K(+)(out) + H(+)(out). Its function is as follows. Transport of potassium into the cell. Likely operates as a K(+):H(+) symporter. This chain is Probable potassium transport system protein Kup 3, found in Dechloromonas aromatica (strain RCB).